We begin with the raw amino-acid sequence, 176 residues long: Inorganic pyrophosphatase (176 aa).

Positions 30, 44, and 56 each coordinate substrate. Mg(2+)-binding residues include Asp-66, Asp-71, and Asp-103. Tyr-142 contacts substrate.

The protein belongs to the PPase family. In terms of assembly, homohexamer. The cofactor is Mg(2+).

The protein localises to the cytoplasm. It catalyses the reaction diphosphate + H2O = 2 phosphate + H(+). Its function is as follows. Catalyzes the hydrolysis of inorganic pyrophosphate (PPi) forming two phosphate ions. The sequence is that of Inorganic pyrophosphatase from Brucella melitensis biotype 1 (strain ATCC 23456 / CCUG 17765 / NCTC 10094 / 16M).